The primary structure comprises 797 residues: Xaa-Pro dipeptidyl-peptidase (797 aa).

Residues serine 370, aspartate 490, and histidine 521 each act as charge relay system in the active site.

This sequence belongs to the peptidase S15 family. In terms of assembly, homodimer.

The protein localises to the cytoplasm. The catalysed reaction is Hydrolyzes Xaa-Pro-|- bonds to release unblocked, N-terminal dipeptides from substrates including Ala-Pro-|-p-nitroanilide and (sequentially) Tyr-Pro-|-Phe-Pro-|-Gly-Pro-|-Ile.. Functionally, removes N-terminal dipeptides sequentially from polypeptides having unsubstituted N-termini provided that the penultimate residue is proline. The polypeptide is Xaa-Pro dipeptidyl-peptidase (Lacticaseibacillus rhamnosus (Lactobacillus rhamnosus)).